Here is a 442-residue protein sequence, read N- to C-terminus: ATP-dependent protease ATPase subunit HslU (442 aa).

ATP contacts are provided by residues Ile-18, 60-65 (GVGKTE), Asp-255, Glu-320, and Arg-392.

It belongs to the ClpX chaperone family. HslU subfamily. As to quaternary structure, a double ring-shaped homohexamer of HslV is capped on each side by a ring-shaped HslU homohexamer. The assembly of the HslU/HslV complex is dependent on binding of ATP.

It is found in the cytoplasm. Its function is as follows. ATPase subunit of a proteasome-like degradation complex; this subunit has chaperone activity. The binding of ATP and its subsequent hydrolysis by HslU are essential for unfolding of protein substrates subsequently hydrolyzed by HslV. HslU recognizes the N-terminal part of its protein substrates and unfolds these before they are guided to HslV for hydrolysis. This Shewanella sp. (strain W3-18-1) protein is ATP-dependent protease ATPase subunit HslU.